A 484-amino-acid polypeptide reads, in one-letter code: tRNA sulfurtransferase (484 aa).

Positions 63–167 (EAFAERLACI…KESLYLVSKR (105 aa)) constitute a THUMP domain. ATP is bound by residues 185–186 (LI), Lys-267, Gly-289, and Gln-298. Cys-346 and Cys-458 are oxidised to a cystine. The Rhodanese domain maps to 406 to 484 (INSGEVIIDV…GYDNVKVYRP (79 aa)). The active-site Cysteine persulfide intermediate is Cys-458.

Belongs to the ThiI family.

Its subcellular location is the cytoplasm. The catalysed reaction is [ThiI sulfur-carrier protein]-S-sulfanyl-L-cysteine + a uridine in tRNA + 2 reduced [2Fe-2S]-[ferredoxin] + ATP + H(+) = [ThiI sulfur-carrier protein]-L-cysteine + a 4-thiouridine in tRNA + 2 oxidized [2Fe-2S]-[ferredoxin] + AMP + diphosphate. The enzyme catalyses [ThiS sulfur-carrier protein]-C-terminal Gly-Gly-AMP + S-sulfanyl-L-cysteinyl-[cysteine desulfurase] + AH2 = [ThiS sulfur-carrier protein]-C-terminal-Gly-aminoethanethioate + L-cysteinyl-[cysteine desulfurase] + A + AMP + 2 H(+). It functions in the pathway cofactor biosynthesis; thiamine diphosphate biosynthesis. Catalyzes the ATP-dependent transfer of a sulfur to tRNA to produce 4-thiouridine in position 8 of tRNAs, which functions as a near-UV photosensor. Also catalyzes the transfer of sulfur to the sulfur carrier protein ThiS, forming ThiS-thiocarboxylate. This is a step in the synthesis of thiazole, in the thiamine biosynthesis pathway. The sulfur is donated as persulfide by IscS. This chain is tRNA sulfurtransferase, found in Shewanella woodyi (strain ATCC 51908 / MS32).